We begin with the raw amino-acid sequence, 86 residues long: Antifungal protein 2 (86 aa).

The signal sequence occupies residues 1–21 (MHLSTALFSAIALLAATQVIG). 3 cysteine pairs are disulfide-bonded: cysteine 43–cysteine 57, cysteine 45–cysteine 74, and cysteine 49–cysteine 83. The lipid-binding stretch occupies residues 44-54 (NCPNNCKHKKG). Residues 72–83 (GKCEWQGGQLNC) carry the Gamma-core motif.

The protein localises to the secreted. Cysteine-rich antifungal protein highly effective against yeasts such as clinically relevant Candida species, including the multidrug-resistant pathogen Candida auris. Does not cause metabolic inactivity and apoptosis induction, but the fungal cell-killing activity is connected to its pore-forming ability in the cell membrane. NFAP2 has a low potential to trigger resistance in C.albicans in vitro, and the developed tolerance to NFAP2 is not associated with severe phenotypic changes compared with development of resistance to generic fluconazole. This Neosartorya fischeri (strain ATCC 1020 / DSM 3700 / CBS 544.65 / FGSC A1164 / JCM 1740 / NRRL 181 / WB 181) (Aspergillus fischerianus) protein is Antifungal protein 2.